The following is a 138-amino-acid chain: Small ribosomal subunit protein uS11c (138 aa).

The interval 1–24 is disordered; sequence MAKSPPRSGSRRPGRIGSRKSGRR. Over residues 9–24 the composition is skewed to basic residues; the sequence is GSRRPGRIGSRKSGRR.

This sequence belongs to the universal ribosomal protein uS11 family. Part of the 30S ribosomal subunit.

The protein localises to the plastid. The protein resides in the chloroplast. The sequence is that of Small ribosomal subunit protein uS11c from Citrus sinensis (Sweet orange).